We begin with the raw amino-acid sequence, 188 residues long: GMP synthase [glutamine-hydrolyzing] subunit A (188 aa).

The Glutamine amidotransferase type-1 domain occupies 1 to 188 (MIVILNNGGQ…FCKVCGLLGE (188 aa)). The active-site Nucleophile is the C76. Catalysis depends on residues H163 and E165.

In terms of assembly, heterodimer composed of a glutamine amidotransferase subunit (A) and a GMP-binding subunit (B).

The catalysed reaction is XMP + L-glutamine + ATP + H2O = GMP + L-glutamate + AMP + diphosphate + 2 H(+). The protein operates within purine metabolism; GMP biosynthesis; GMP from XMP (L-Gln route): step 1/1. Functionally, catalyzes the synthesis of GMP from XMP. The sequence is that of GMP synthase [glutamine-hydrolyzing] subunit A from Methanococcus aeolicus (strain ATCC BAA-1280 / DSM 17508 / OCM 812 / Nankai-3).